A 62-amino-acid chain; its full sequence is UPF0434 protein ASA_1553 (62 aa).

The protein belongs to the UPF0434 family.

The polypeptide is UPF0434 protein ASA_1553 (Aeromonas salmonicida (strain A449)).